Consider the following 428-residue polypeptide: D-amino acid dehydrogenase (428 aa).

3–17 (VVILGSGVVGVASAY) is an FAD binding site.

This sequence belongs to the DadA oxidoreductase family. Requires FAD as cofactor.

The enzyme catalyses a D-alpha-amino acid + A + H2O = a 2-oxocarboxylate + AH2 + NH4(+). It functions in the pathway amino-acid degradation; D-alanine degradation; NH(3) and pyruvate from D-alanine: step 1/1. Its function is as follows. Oxidative deamination of D-amino acids. This Burkholderia thailandensis (strain ATCC 700388 / DSM 13276 / CCUG 48851 / CIP 106301 / E264) protein is D-amino acid dehydrogenase.